Reading from the N-terminus, the 318-residue chain is Deoxymugineic acid synthase 1 (318 aa).

Position 48 (D48) interacts with NADP(+). The active-site Proton donor is Y53. H116 contacts substrate. Residues 162–163 (CN), Q184, 262–270 (FDEARMREN), and 277–285 (ELTEEERQR) contribute to the NADP(+) site.

This sequence belongs to the aldo/keto reductase family. In terms of tissue distribution, confined to cells participating in long distance transport (e.g. in the parts of pericycle cells adjacent to the protoxylem and metaxylem) in roots and to vascular bundles in shoots.

The enzyme catalyses 2'-deoxymugineate + NAD(+) = 3''-deamino-3''-oxonicotianamine + NADH + H(+). It carries out the reaction 2'-deoxymugineate + NADP(+) = 3''-deamino-3''-oxonicotianamine + NADPH + H(+). It functions in the pathway siderophore biosynthesis. Its function is as follows. Catalyzes the reduction of a 3''-keto intermediate during the biosynthesis of 2'-deoxymugineic acid (DMA) from L-Met. Involved in the formation of phytosiderophores (MAs) belonging to the mugineic acid family and required to acquire iron. The polypeptide is Deoxymugineic acid synthase 1 (Oryza sativa subsp. japonica (Rice)).